The primary structure comprises 262 residues: Thiazole synthase (262 aa).

K97 acts as the Schiff-base intermediate with DXP in catalysis. Residues G158, 185-186 (AG), and 207-208 (NT) each bind 1-deoxy-D-xylulose 5-phosphate.

The protein belongs to the ThiG family. As to quaternary structure, homotetramer. Forms heterodimers with either ThiH or ThiS.

It is found in the cytoplasm. It catalyses the reaction [ThiS sulfur-carrier protein]-C-terminal-Gly-aminoethanethioate + 2-iminoacetate + 1-deoxy-D-xylulose 5-phosphate = [ThiS sulfur-carrier protein]-C-terminal Gly-Gly + 2-[(2R,5Z)-2-carboxy-4-methylthiazol-5(2H)-ylidene]ethyl phosphate + 2 H2O + H(+). It functions in the pathway cofactor biosynthesis; thiamine diphosphate biosynthesis. Functionally, catalyzes the rearrangement of 1-deoxy-D-xylulose 5-phosphate (DXP) to produce the thiazole phosphate moiety of thiamine. Sulfur is provided by the thiocarboxylate moiety of the carrier protein ThiS. In vitro, sulfur can be provided by H(2)S. In Neisseria gonorrhoeae (strain ATCC 700825 / FA 1090), this protein is Thiazole synthase.